Reading from the N-terminus, the 206-residue chain is 3-isopropylmalate dehydratase small subunit (206 aa).

Belongs to the LeuD family. LeuD type 1 subfamily. In terms of assembly, heterodimer of LeuC and LeuD.

It carries out the reaction (2R,3S)-3-isopropylmalate = (2S)-2-isopropylmalate. It participates in amino-acid biosynthesis; L-leucine biosynthesis; L-leucine from 3-methyl-2-oxobutanoate: step 2/4. In terms of biological role, catalyzes the isomerization between 2-isopropylmalate and 3-isopropylmalate, via the formation of 2-isopropylmaleate. In Leptospira borgpetersenii serovar Hardjo-bovis (strain L550), this protein is 3-isopropylmalate dehydratase small subunit.